The chain runs to 1141 residues: Membrane-associated protein gex-3 (1141 aa).

It belongs to the HEM-1/HEM-2 family. Interacts with aco-1, gei-13 and gex-2. Interacts with gex-3. In terms of tissue distribution, expressed in neurons.

Its subcellular location is the cytoplasm. Its function is as follows. Rac effector required for tissue morphogenesis, cell migrations and egg laying. May play a role in egg laying and in yolk protein clatherin-mediated endocytosis by oocytes during oogenesis. Plays a role in the formation of gap junctions between EA and EP endodermal precursor cells in embryos. This Caenorhabditis elegans protein is Membrane-associated protein gex-3.